We begin with the raw amino-acid sequence, 471 residues long: Mannose-1-phosphate guanylyltransferase (471 aa).

Belongs to the mannose-6-phosphate isomerase type 2 family.

The catalysed reaction is alpha-D-mannose 1-phosphate + GTP + H(+) = GDP-alpha-D-mannose + diphosphate. Its pathway is nucleotide-sugar biosynthesis; GDP-alpha-D-mannose biosynthesis; GDP-alpha-D-mannose from alpha-D-mannose 1-phosphate (GTP route): step 1/1. In terms of biological role, involved in the biosynthesis of the K2 capsular polysaccharide biosynthesis. The protein is Mannose-1-phosphate guanylyltransferase (manC) of Klebsiella pneumoniae.